A 311-amino-acid chain; its full sequence is Olfactory receptor 2Y1 (311 aa).

The Extracellular portion of the chain corresponds to 1–25 (MGSFNTSFEDGFILVGFSDWPQLEP). Residue asparagine 5 is glycosylated (N-linked (GlcNAc...) asparagine). A helical membrane pass occupies residues 26–49 (ILFVFIFIFYSLTLFGNTIIIALS). Over 50–57 (WLDLRLHT) the chain is Cytoplasmic. Residues 58-79 (PMYFFLSHLSLLDLCFTTSTVP) form a helical membrane-spanning segment. Residues 80–100 (QLLINLCGVDRTITRGGCVAQ) are Extracellular-facing. Cysteine 97 and cysteine 188 are oxidised to a cystine. Residues 101-120 (LFIYLALGSTECVLLVVMAF) traverse the membrane as a helical segment. Residues 121–139 (DRYAAVCRPLHYMAIMHPH) lie on the Cytoplasmic side of the membrane. Residues 140–158 (LCQTLAIASWGAGFVNSLI) form a helical membrane-spanning segment. Residues 159–194 (QTGLAMAMPLCGHRLNHFFCEMPVFLKLACADTEGT) lie on the Extracellular side of the membrane. The chain crosses the membrane as a helical span at residues 195–218 (EAKMFVARVIVVAVPAALILGSYV). The Cytoplasmic portion of the chain corresponds to 219–235 (HIAHAVLRVKSTAGRRK). Residues 236–258 (AFGTCGSHLLVVFLFYGSAIYTY) form a helical membrane-spanning segment. Residues 259 to 271 (LQSIHNYSEREGK) lie on the Extracellular side of the membrane. Asparagine 264 carries N-linked (GlcNAc...) asparagine glycosylation. The chain crosses the membrane as a helical span at residues 272–291 (FVALFYTIITPILNPLIYTL). Topologically, residues 292 to 311 (RNKDVKGALWKVLWRGRDSG) are cytoplasmic.

It belongs to the G-protein coupled receptor 1 family.

It localises to the cell membrane. In terms of biological role, odorant receptor. The chain is Olfactory receptor 2Y1 (OR2Y1) from Homo sapiens (Human).